A 253-amino-acid polypeptide reads, in one-letter code: Small ribosomal subunit protein eS4 (253 aa).

Residues 43–114 form the S4 RNA-binding domain; the sequence is LPLLLIVRNV…YPVKFFKLHP (72 aa).

The protein belongs to the eukaryotic ribosomal protein eS4 family.

This is Small ribosomal subunit protein eS4 (rps4e) from Aeropyrum pernix (strain ATCC 700893 / DSM 11879 / JCM 9820 / NBRC 100138 / K1).